We begin with the raw amino-acid sequence, 304 residues long: Protease HtpX homolog (304 aa).

The next 2 membrane-spanning stretches (helical) occupy residues 14 to 34 (VFII…IGII) and 39 to 59 (YLNG…IMVM). His144 serves as a coordination point for Zn(2+). Residue Glu145 is part of the active site. His148 provides a ligand contact to Zn(2+). Transmembrane regions (helical) follow at residues 159–179 (IAIA…RMIF) and 202–222 (AIIY…ATAI). Glu231 serves as a coordination point for Zn(2+).

The protein belongs to the peptidase M48B family. Zn(2+) is required as a cofactor.

It is found in the cell membrane. This chain is Protease HtpX homolog, found in Listeria monocytogenes serotype 4a (strain HCC23).